The chain runs to 152 residues: Small ribosomal subunit protein bS6 (152 aa).

The tract at residues 96–152 (HEEGPSAMLQKRDRDDRGPREGGDRGPRREFGDRPPRRDGDFQRGPRPDRAPREDRA) is disordered.

It belongs to the bacterial ribosomal protein bS6 family.

Binds together with bS18 to 16S ribosomal RNA. This is Small ribosomal subunit protein bS6 from Rhizobium etli (strain CIAT 652).